The following is a 116-amino-acid chain: Large ribosomal subunit protein bL17 (116 aa).

It belongs to the bacterial ribosomal protein bL17 family. As to quaternary structure, part of the 50S ribosomal subunit. Contacts protein L32.

The polypeptide is Large ribosomal subunit protein bL17 (Picosynechococcus sp. (strain ATCC 27264 / PCC 7002 / PR-6) (Agmenellum quadruplicatum)).